The primary structure comprises 147 residues: Large ribosomal subunit protein mL40 (147 aa).

Residues M1–N26 constitute a mitochondrion transit peptide.

Belongs to the mitochondrion-specific ribosomal protein mL40 family. As to quaternary structure, component of the mitochondrial large ribosomal subunit (mt-LSU). Mature yeast 74S mitochondrial ribosomes consist of a small (37S) and a large (54S) subunit. The 37S small subunit contains a 15S ribosomal RNA (15S mt-rRNA) and 34 different proteins. The 54S large subunit contains a 21S rRNA (21S mt-rRNA) and 46 different proteins.

The protein localises to the mitochondrion. Functionally, component of the mitochondrial ribosome (mitoribosome), a dedicated translation machinery responsible for the synthesis of mitochondrial genome-encoded proteins, including at least some of the essential transmembrane subunits of the mitochondrial respiratory chain. The mitoribosomes are attached to the mitochondrial inner membrane and translation products are cotranslationally integrated into the membrane. This is Large ribosomal subunit protein mL40 (MRPL28) from Saccharomyces cerevisiae (strain ATCC 204508 / S288c) (Baker's yeast).